The chain runs to 61 residues: Small ribosomal subunit protein uS14 (61 aa).

Residues Cys24, Cys27, Cys40, and Cys43 each contribute to the Zn(2+) site.

Belongs to the universal ribosomal protein uS14 family. Zinc-binding uS14 subfamily. In terms of assembly, part of the 30S ribosomal subunit. Contacts proteins S3 and S10. Zn(2+) is required as a cofactor.

Its function is as follows. Binds 16S rRNA, required for the assembly of 30S particles and may also be responsible for determining the conformation of the 16S rRNA at the A site. The chain is Small ribosomal subunit protein uS14 from Symbiobacterium thermophilum (strain DSM 24528 / JCM 14929 / IAM 14863 / T).